The chain runs to 200 residues: Lipopolysaccharide core heptose(II)-phosphate phosphatase (200 aa).

The first 25 residues, 1–25 (MLAFCRSSLKSKKYFIILLALAAIA), serve as a signal peptide directing secretion.

It belongs to the phosphoglycerate mutase family. Ais subfamily.

It localises to the periplasm. The protein operates within bacterial outer membrane biogenesis; lipopolysaccharide metabolism. Functionally, catalyzes the dephosphorylation of heptose(II) of the outer membrane lipopolysaccharide core. The protein is Lipopolysaccharide core heptose(II)-phosphate phosphatase of Escherichia coli O6:K15:H31 (strain 536 / UPEC).